The chain runs to 320 residues: Phosphate acyltransferase (320 aa).

The protein belongs to the PlsX family. In terms of assembly, homodimer. Probably interacts with PlsY.

Its subcellular location is the cytoplasm. It catalyses the reaction a fatty acyl-[ACP] + phosphate = an acyl phosphate + holo-[ACP]. It participates in lipid metabolism; phospholipid metabolism. Its function is as follows. Catalyzes the reversible formation of acyl-phosphate (acyl-PO(4)) from acyl-[acyl-carrier-protein] (acyl-ACP). This enzyme utilizes acyl-ACP as fatty acyl donor, but not acyl-CoA. In Syntrophomonas wolfei subsp. wolfei (strain DSM 2245B / Goettingen), this protein is Phosphate acyltransferase.